A 133-amino-acid polypeptide reads, in one-letter code: Small ribosomal subunit protein uS15 (133 aa).

The protein belongs to the universal ribosomal protein uS15 family. In terms of assembly, part of the 30S ribosomal subunit.

The sequence is that of Small ribosomal subunit protein uS15 from Methanosphaera stadtmanae (strain ATCC 43021 / DSM 3091 / JCM 11832 / MCB-3).